The chain runs to 278 residues: Nudix hydrolase 2 (278 aa).

Residues 110 to 242 (SHRVGIGAFV…ELLRYMTDIC (133 aa)) enclose the Nudix hydrolase domain. A Nudix box motif is present at residues 147–168 (GVVNEGEDIHDGSVREVKEETG). Glutamate 162 lines the Mg(2+) pocket. The Proton acceptor role is filled by glutamate 165. Position 166 (glutamate 166) interacts with Mg(2+).

This sequence belongs to the Nudix hydrolase family. It depends on Mg(2+) as a cofactor. The cofactor is Mn(2+). In terms of tissue distribution, expressed in roots, stems and leaves.

The catalysed reaction is ADP-D-ribose + H2O = D-ribose 5-phosphate + AMP + 2 H(+). It carries out the reaction NAD(+) + H2O = beta-nicotinamide D-ribonucleotide + AMP + 2 H(+). The enzyme catalyses NADH + H2O = reduced beta-nicotinamide D-ribonucleotide + AMP + 2 H(+). Functionally, probably mediates the hydrolysis of some nucleoside diphosphate derivatives. In vitro, it can use both NADH and ADP-ribose as substrates; however the relevance of such substrates in vivo is unclear. Confers tolerance to oxidative stress. This chain is Nudix hydrolase 2, found in Arabidopsis thaliana (Mouse-ear cress).